Here is a 326-residue protein sequence, read N- to C-terminus: D-amino-acid oxidase (326 aa).

9 residues coordinate FAD: Gly-18, Val-19, Thr-46, Thr-47, Ser-48, Ala-52, Ala-53, Val-162, and Ser-179. Residues Tyr-222 and Arg-277 each contribute to the D-proline site. D-serine-binding residues include Tyr-222 and Arg-277. 5 residues coordinate FAD: Arg-277, Gly-303, Gly-304, Gly-306, and Thr-308. A D-proline-binding site is contributed by Gly-304. Residue Gly-304 coordinates D-serine.

This sequence belongs to the DAMOX/DASOX family. Monomer. FAD is required as a cofactor.

It is found in the cytoplasm. The protein resides in the secreted. Its subcellular location is the cell wall. The catalysed reaction is a D-alpha-amino acid + O2 + H2O = a 2-oxocarboxylate + H2O2 + NH4(+). The enzyme catalyses D-valine + O2 + H2O = 3-methyl-2-oxobutanoate + H2O2 + NH4(+). It catalyses the reaction D-leucine + O2 + H2O = 4-methyl-2-oxopentanoate + H2O2 + NH4(+). It carries out the reaction D-isoleucine + O2 + H2O = (R)-3-methyl-2-oxopentanoate + H2O2 + NH4(+). The catalysed reaction is D-tyrosine + O2 + H2O = 3-(4-hydroxyphenyl)pyruvate + H2O2 + NH4(+). The enzyme catalyses D-threonine + O2 + H2O = (S)-3-hydroxy-2-oxobutanoate + H2O2 + NH4(+). With respect to regulation, inhibited by benzoate and phenylmethylsulfonyl fluoride (PMSF). Weakly inhibited by anthranilate, crotonate, and the amino acid-modifying agents dithionitrobenzoic acid and diethyl pyrocarbonate. Not inhibited by malonate, meso-tartrate, D-malate, or the amino acid-modifying agents iodoacetic acid or butane-2,3-dione. Catalyzes the oxidative deamination of D-amino acids with broad substrate specificity. In Rubrobacter xylanophilus (strain DSM 9941 / JCM 11954 / NBRC 16129 / PRD-1), this protein is D-amino-acid oxidase.